The following is a 922-amino-acid chain: Chaperone protein ClpC, chloroplastic (922 aa).

Residues 1–72 constitute a chloroplast transit peptide; it reads MARVLAQSLS…RPGLDFHSKV (72 aa). Residues 92–234 enclose the Clp R domain; the sequence is FERFTEKAIK…RTQVIRMVGE (143 aa). Repeat regions lie at residues 95–160 and 170–234; these read FTEK…IGRG and FTPR…MVGE. Residues 255 to 502 form an i region; that stretch reads LEEYGTNLTK…RVRLQHAQLP (248 aa). 300-307 is a binding site for ATP; sequence GEPGVGKT. Residues 509–544 form the UVR domain; the sequence is DKEVRKIVKEKEEYVRNQDFEKAGELRDKEMDLKAQ. Positions 569–760 are II; that stretch reads VTEVDIQHIV…LLIMTSNVGS (192 aa). An ATP-binding site is contributed by 643–650; that stretch reads GPTGVGKS.

The protein belongs to the ClpA/ClpB family. ClpC subfamily.

It localises to the plastid. It is found in the chloroplast. Its function is as follows. Molecular chaperone that may interact with a ClpP-like protease involved in degradation of denatured proteins in the chloroplast. The sequence is that of Chaperone protein ClpC, chloroplastic from Pisum sativum (Garden pea).